Here is a 270-residue protein sequence, read N- to C-terminus: 4-hydroxy-tetrahydrodipicolinate reductase (270 aa).

NAD(+) is bound by residues 11 to 16 and Glu37; that span reads GAGGRM. NADP(+) is bound at residue Arg38. NAD(+) is bound by residues 101–103 and 125–128; these read GTT and APNM. Residue His158 is the Proton donor/acceptor of the active site. Residue His159 coordinates (S)-2,3,4,5-tetrahydrodipicolinate. Lys162 acts as the Proton donor in catalysis. 168–169 is a (S)-2,3,4,5-tetrahydrodipicolinate binding site; sequence GT.

It belongs to the DapB family.

Its subcellular location is the cytoplasm. It carries out the reaction (S)-2,3,4,5-tetrahydrodipicolinate + NAD(+) + H2O = (2S,4S)-4-hydroxy-2,3,4,5-tetrahydrodipicolinate + NADH + H(+). The catalysed reaction is (S)-2,3,4,5-tetrahydrodipicolinate + NADP(+) + H2O = (2S,4S)-4-hydroxy-2,3,4,5-tetrahydrodipicolinate + NADPH + H(+). It functions in the pathway amino-acid biosynthesis; L-lysine biosynthesis via DAP pathway; (S)-tetrahydrodipicolinate from L-aspartate: step 4/4. Catalyzes the conversion of 4-hydroxy-tetrahydrodipicolinate (HTPA) to tetrahydrodipicolinate. The polypeptide is 4-hydroxy-tetrahydrodipicolinate reductase (Shewanella baltica (strain OS223)).